The following is a 165-amino-acid chain: 2-C-methyl-D-erythritol 2,4-cyclodiphosphate synthase (165 aa).

2 residues coordinate a divalent metal cation: aspartate 12 and histidine 14. 4-CDP-2-C-methyl-D-erythritol 2-phosphate is bound by residues 12 to 14 and 38 to 39; these read DVH and HS. A divalent metal cation is bound at residue histidine 46. Residues 60 to 62, 65 to 69, phenylalanine 143, and arginine 146 contribute to the 4-CDP-2-C-methyl-D-erythritol 2-phosphate site; these read DIG and FPDTD.

The protein belongs to the IspF family. In terms of assembly, homotrimer. It depends on a divalent metal cation as a cofactor.

It carries out the reaction 4-CDP-2-C-methyl-D-erythritol 2-phosphate = 2-C-methyl-D-erythritol 2,4-cyclic diphosphate + CMP. Its pathway is isoprenoid biosynthesis; isopentenyl diphosphate biosynthesis via DXP pathway; isopentenyl diphosphate from 1-deoxy-D-xylulose 5-phosphate: step 4/6. Functionally, involved in the biosynthesis of isopentenyl diphosphate (IPP) and dimethylallyl diphosphate (DMAPP), two major building blocks of isoprenoid compounds. Catalyzes the conversion of 4-diphosphocytidyl-2-C-methyl-D-erythritol 2-phosphate (CDP-ME2P) to 2-C-methyl-D-erythritol 2,4-cyclodiphosphate (ME-CPP) with a corresponding release of cytidine 5-monophosphate (CMP). This chain is 2-C-methyl-D-erythritol 2,4-cyclodiphosphate synthase, found in Aromatoleum aromaticum (strain DSM 19018 / LMG 30748 / EbN1) (Azoarcus sp. (strain EbN1)).